We begin with the raw amino-acid sequence, 2186 residues long: Non-reducing polyketide synthase men2 (2186 aa).

The Starter acyltransferase (SAT) domain maps to 16–255 (FFGDQTVDAL…MQLPLGTPAH (240 aa)). Residues 382 to 815 (SNLIAVVGQS…GGNNCVLLEE (434 aa)) enclose the Ketosynthase family 3 (KS3) domain. Residues C554, H690, and H729 each act as for beta-ketoacyl synthase activity in the active site. One can recognise a Malonyl-CoA:ACP transacylase (MAT) domain in the interval 914–1204 (VFAFTGQGAQ…SSLVKSTLSA (291 aa)). The product template (PT) domain stretch occupies residues 1299 to 1623 (TASLQQVRSE…TRRVLATVLG (325 aa)). Positions 1303–1434 (QQVRSEQING…CKLHFDKRGS (132 aa)) are N-terminal hotdog fold. The PKS/mFAS DH domain occupies 1303-1619 (QQVRSEQING…FQRLTRRVLA (317 aa)). Catalysis depends on H1335, which acts as the Proton acceptor; for dehydratase activity. Residues 1463–1619 (TGHRLPKSVV…FQRLTRRVLA (157 aa)) form a C-terminal hotdog fold region. Residue D1523 is the Proton donor; for dehydratase activity of the active site. The Carrier 1 domain occupies 1666–1742 (VGDEKADAAI…GLRRAISELS (77 aa)). Position 1702 is an O-(pantetheine 4'-phosphoryl)serine (S1702). Residues 1747 to 1785 (GPASGSVSVSSSATTTHGMTTPSSTSSAQSSQSSQTPDG) form a disordered region. A compositionally biased stretch (low complexity) spans 1749-1783 (ASGSVSVSSSATTTHGMTTPSSTSSAQSSQSSQTP). The Carrier 2 domain occupies 1784–1861 (DGPGIYANAV…HVRRALGSDS (78 aa)). Position 1821 is an O-(pantetheine 4'-phosphoryl)serine (S1821). The disordered stretch occupies residues 1857 to 1878 (LGSDSDGDSKPKSAPAPPAPEP). Residues 1921-2163 (LFFLPDGTGY…TMPCDHLSLL (243 aa)) form a thioesterase (TE) domain region.

The cofactor is pantetheine 4'-phosphate.

It functions in the pathway secondary metabolite biosynthesis. Functionally, non-reducing polyketide synthase; part of the gene cluster that mediates the biosynthesis of menisporopsin A, a bioactive macrocyclic polylactone. The biosynthesis of menisporopsin A is performed by a reducing (man1) and a non-reducing (men2) polyketide synthase that catalyze the formation of each menisporopsin A subunits, while the esterification and cyclolactonization activities are probably peformed by the unusual thioesterase domain of men2. First, a reduced diketide intermediate, 3-hydroxybutyryl-S-ACP is produced by men1 and transferred to men2; this is followed by a second reduced diketide which is further elongated using 3 units of malonyl-coA to form a reduced pentaketide. The cyclization of this intermediate by the PT domain forms the second subunit, 2,4-dihydroxy-6-(2-hydroxy-n-propyl)benzoyl-S-ACP. The TE domain of men2 then esterifies the secondary hydroxyl group on the side chain of the second subunit with the acyl-TE of the first subunit to form the first ester intermediate. This process occurs iteratively to form a linear tetraester intermediate. The final subunit is formed by a similar process, except that an extra malonyl-CoA is required in an additional elongation step to form a reduced hexaketide intermediate, and the carbonyl group next to the secondary hydroxyl group is reduced by a trans-acting ketoreductase. Again, the PT domain catalyzes cyclization to form the largest subunit, 2,4-dihydroxy-6-(2,4-dihydroxy-n-pentyl) benzoyl-S-ACP. Then the linear pentaester intermediate is formed. In this step, if the intermediate transfer rate is slow, intra- molecular cyclization involving the secondary hydroxyl group of the pentaester intermediate may occur to form menisporopsin B. Alternatively, transfer of the pentaester intermediate to the TE domain would allow cyclolactonization to be catalyzed by the TE to form menisporopsin A. This chain is Non-reducing polyketide synthase men2, found in Menisporopsis theobromae.